Consider the following 66-residue polypeptide: MKFSALLPVFFLLLAVIDYCQAFAFLAAIPSILSALGKRDVKTQKYVDIKRRDLDLDDMLSKLFED.

Positions 1-22 are cleaved as a signal peptide; that stretch reads MKFSALLPVFFLLLAVIDYCQA. The residue at position 36 (Leu-36) is a Leucine amide. A propeptide spanning residues 37–66 is cleaved from the precursor; it reads GKRDVKTQKYVDIKRRDLDLDDMLSKLFED.

Belongs to the non-disulfide-bridged peptide (NDBP) superfamily. Short antimicrobial peptide (group 4) family. In terms of tissue distribution, expressed by the venom gland.

It localises to the secreted. Probable antimicrobial peptide. Has no inhibitory activity against herpes simplex virus type 1 (HSV-1). The protein is Antimicrobial peptide Eval967 of Euscorpiops validus (Scorpion).